The primary structure comprises 305 residues: Aspartate carbamoyltransferase catalytic subunit (305 aa).

Residues Arg54 and Thr55 each contribute to the carbamoyl phosphate site. Lys82 is an L-aspartate binding site. Residues Arg104, His132, and Gln135 each contribute to the carbamoyl phosphate site. Positions 165 and 218 each coordinate L-aspartate. Gly259 and Pro260 together coordinate carbamoyl phosphate.

It belongs to the aspartate/ornithine carbamoyltransferase superfamily. ATCase family. In terms of assembly, heterododecamer (2C3:3R2) of six catalytic PyrB chains organized as two trimers (C3), and six regulatory PyrI chains organized as three dimers (R2).

It catalyses the reaction carbamoyl phosphate + L-aspartate = N-carbamoyl-L-aspartate + phosphate + H(+). It participates in pyrimidine metabolism; UMP biosynthesis via de novo pathway; (S)-dihydroorotate from bicarbonate: step 2/3. Catalyzes the condensation of carbamoyl phosphate and aspartate to form carbamoyl aspartate and inorganic phosphate, the committed step in the de novo pyrimidine nucleotide biosynthesis pathway. This is Aspartate carbamoyltransferase catalytic subunit from Caldicellulosiruptor bescii (strain ATCC BAA-1888 / DSM 6725 / KCTC 15123 / Z-1320) (Anaerocellum thermophilum).